The following is a 385-amino-acid chain: 8-amino-7-oxononanoate synthase (385 aa).

Arg-21 contacts substrate. 108–109 (GF) lines the pyridoxal 5'-phosphate pocket. His-133 is a binding site for substrate. Ser-179, His-207, and Thr-233 together coordinate pyridoxal 5'-phosphate. Lys-236 is modified (N6-(pyridoxal phosphate)lysine). Thr-352 contributes to the substrate binding site.

This sequence belongs to the class-II pyridoxal-phosphate-dependent aminotransferase family. BioF subfamily. In terms of assembly, homodimer. It depends on pyridoxal 5'-phosphate as a cofactor.

The catalysed reaction is 6-carboxyhexanoyl-[ACP] + L-alanine + H(+) = (8S)-8-amino-7-oxononanoate + holo-[ACP] + CO2. It functions in the pathway cofactor biosynthesis; biotin biosynthesis. In terms of biological role, catalyzes the decarboxylative condensation of pimeloyl-[acyl-carrier protein] and L-alanine to produce 8-amino-7-oxononanoate (AON), [acyl-carrier protein], and carbon dioxide. The protein is 8-amino-7-oxononanoate synthase of Klebsiella pneumoniae (strain 342).